Here is a 236-residue protein sequence, read N- to C-terminus: EEF1A lysine methyltransferase 2 (236 aa).

A compositionally biased stretch (gly residues) spans 1-11; it reads MSSGADGGGGA. Positions 1–31 are disordered; it reads MSSGADGGGGAAVAARSDKGSPGEDGFVPSA. Position 2 is an N-acetylserine (serine 2). Phosphoserine is present on serine 21.

It belongs to the class I-like SAM-binding methyltransferase superfamily. EFM4 family.

Its subcellular location is the cytoplasm. It is found in the nucleus. The enzyme catalyses L-lysyl-[protein] + 3 S-adenosyl-L-methionine = N(6),N(6),N(6)-trimethyl-L-lysyl-[protein] + 3 S-adenosyl-L-homocysteine + 3 H(+). Its function is as follows. Protein-lysine methyltransferase that selectively catalyzes the trimethylation of EEF1A at 'Lys-318'. The polypeptide is EEF1A lysine methyltransferase 2 (Homo sapiens (Human)).